A 273-amino-acid polypeptide reads, in one-letter code: HMP-PP phosphatase (273 aa).

Catalysis depends on D8, which acts as the Nucleophile. Mg(2+)-binding residues include D8, D10, and D212.

This sequence belongs to the HAD-like hydrolase superfamily. Cof family. Mg(2+) serves as cofactor.

It catalyses the reaction 4-amino-2-methyl-5-(diphosphooxymethyl)pyrimidine + H2O = 4-amino-2-methyl-5-(phosphooxymethyl)pyrimidine + phosphate + H(+). Catalyzes the hydrolysis of 4-amino-2-methyl-5-hydroxymethylpyrimidine pyrophosphate (HMP-PP) to 4-amino-2-methyl-5-hydroxymethylpyrimidine phosphate (HMP-P). The protein is HMP-PP phosphatase of Yersinia enterocolitica serotype O:8 / biotype 1B (strain NCTC 13174 / 8081).